Reading from the N-terminus, the 462-residue chain is Probable serine/threonine-protein kinase DDB_G0286841 (462 aa).

The Protein kinase domain occupies 64–358 (FNFLKVISKG…VDEVKCHPFF (295 aa)). ATP is bound by residues 70-78 (ISKGGFGKV) and Lys-93. Catalysis depends on Asp-188, which acts as the Proton acceptor. Positions 359–462 (SEINWKIYED…LFIDFDFPTY (104 aa)) constitute an AGC-kinase C-terminal domain. Low complexity predominate over residues 414-439 (NIYKNNNNNNNNNNNNNNNNNNNNNN). The interval 414–447 (NIYKNNNNNNNNNNNNNNNNNNNNNNDDNDDENN) is disordered.

It belongs to the protein kinase superfamily. AGC Ser/Thr protein kinase family.

The enzyme catalyses L-seryl-[protein] + ATP = O-phospho-L-seryl-[protein] + ADP + H(+). The catalysed reaction is L-threonyl-[protein] + ATP = O-phospho-L-threonyl-[protein] + ADP + H(+). In Dictyostelium discoideum (Social amoeba), this protein is Probable serine/threonine-protein kinase DDB_G0286841.